The chain runs to 331 residues: Smad-related protein daf-14 (331 aa).

In terms of domain architecture, MH2 spans 134 to 331 (WCTIFYYELT…NERPEIGSRS (198 aa)). Residues 168–187 (ECRMSLTSQPSSRNSKSSQI) are disordered. A compositionally biased stretch (low complexity) spans 175-185 (SQPSSRNSKSS).

As to quaternary structure, interacts with R-SMAD daf-8 and co-SMAD daf-3. Interacts with daf-3 in a daf-8 dependent manner.

In terms of biological role, probably an atypical receptor-regulated SMAD (R-SMAD) that is an intracellular signal transducer and transcriptional modulator activated by TGF-beta-like daf-7 signaling. Plays a role in TGF-beta-like daf-7 signaling in regulating entry into a developmentally arrested larval state known as dauer, in response to harsh environmental conditions; partially redundant with R-SMAD daf-8. This is Smad-related protein daf-14 from Caenorhabditis elegans.